The sequence spans 113 residues: Cytochrome c2 (113 aa).

The heme c site is built by C15, C18, H19, and M92.

The protein belongs to the cytochrome c family. Binds 1 heme c group covalently per subunit.

Functionally, cytochrome c2 is found mainly in purple, non-sulfur, photosynthetic bacteria where it functions as the electron donor to the oxidized bacteriochlorophyll in the photophosphorylation pathway. However, it may also have a role in the respiratory chain and is found in some non-photosynthetic bacteria. In Pararhodospirillum photometricum (Rhodospirillum photometricum), this protein is Cytochrome c2.